The following is a 310-amino-acid chain: Homoserine kinase (310 aa).

Residue 95-105 participates in ATP binding; sequence PQSRGLGSSAA.

The protein belongs to the GHMP kinase family. Homoserine kinase subfamily.

The protein localises to the cytoplasm. It carries out the reaction L-homoserine + ATP = O-phospho-L-homoserine + ADP + H(+). It functions in the pathway amino-acid biosynthesis; L-threonine biosynthesis; L-threonine from L-aspartate: step 4/5. In terms of biological role, catalyzes the ATP-dependent phosphorylation of L-homoserine to L-homoserine phosphate. The sequence is that of Homoserine kinase from Corynebacterium kroppenstedtii (strain DSM 44385 / JCM 11950 / CIP 105744 / CCUG 35717).